Reading from the N-terminus, the 341-residue chain is HTH-type transcriptional repressor PurR (341 aa).

Positions 2 to 56 (ATIKDVAKRAGVSTTTVSHVINKTRFVADETREAVWVAIKELHYSPSAVARSLKV) constitute an HTH lacI-type domain. Residues 4-23 (IKDVAKRAGVSTTTVSHVIN) constitute a DNA-binding region (H-T-H motif). Residues 48 to 56 (SAVARSLKV) mediate DNA binding. The hypoxanthine site is built by Tyr-73, Arg-190, Thr-192, Phe-221, and Asp-275.

In terms of assembly, homodimer.

It functions in the pathway purine metabolism; purine nucleotide biosynthesis [regulation]. In terms of biological role, is the main repressor of the genes involved in the de novo synthesis of purine nucleotides, regulating purB, purC, purEK, purF, purHD, purL, purMN and guaBA expression. PurR is allosterically activated to bind its cognate DNA by binding the purine corepressors, hypoxanthine or guanine, thereby effecting transcription repression. This Erwinia tasmaniensis (strain DSM 17950 / CFBP 7177 / CIP 109463 / NCPPB 4357 / Et1/99) protein is HTH-type transcriptional repressor PurR.